The primary structure comprises 108 residues: UPF0060 membrane protein SAB2216c (108 aa).

Transmembrane regions (helical) follow at residues isoleucine 5–tryptophan 25, cysteine 31–phenylalanine 51, valine 60–aspartate 80, and lysine 86–serine 106.

The protein belongs to the UPF0060 family.

Its subcellular location is the cell membrane. This chain is UPF0060 membrane protein SAB2216c, found in Staphylococcus aureus (strain bovine RF122 / ET3-1).